The chain runs to 197 residues: Cold-regulated 413 plasma membrane protein 1 (197 aa).

Residues 1 to 40 are Extracellular-facing; that stretch reads MPMKSLRNDHGTLKAMIGSDFNELTIAAKNLATHAFTLTG. A helical membrane pass occupies residues 41-61; that stretch reads LGFGTSVLEWVASIAAIYLLV. The Cytoplasmic segment spans residues 62–71; sequence LDRTNWKTNM. Residues 72–92 traverse the membrane as a helical segment; it reads LTSLLIPYIFFSLPSLIFGIF. Residues 93–94 are Extracellular-facing; sequence RG. The chain crosses the membrane as a helical span at residues 95–115; sequence EIGKWIAFVAVVVQLFFPKHA. At 116–117 the chain is on the cytoplasmic side; that stretch reads RE. A helical transmembrane segment spans residues 118-138; it reads YLELPVALVLLAVVAPNLIAG. Residues 139–141 are Extracellular-facing; it reads TFR. The helical transmembrane segment at 142 to 162 threads the bilayer; sequence DSWIGLAICLGIGCYLLQEHI. At 163–176 the chain is on the cytoplasmic side; that stretch reads RASGGFRNAFTKAN. The helical transmembrane segment at 177–197 threads the bilayer; it reads GISNTVGIICLVVFPVWALIF.

Belongs to the Cold-regulated 413 protein family.

It is found in the membrane. The chain is Cold-regulated 413 plasma membrane protein 1 (COR413PM1) from Arabidopsis thaliana (Mouse-ear cress).